The following is a 113-amino-acid chain: Prefoldin subunit beta (113 aa).

The protein belongs to the prefoldin subunit beta family. In terms of assembly, heterohexamer of two alpha and four beta subunits.

Its subcellular location is the cytoplasm. Molecular chaperone capable of stabilizing a range of proteins. Seems to fulfill an ATP-independent, HSP70-like function in archaeal de novo protein folding. The chain is Prefoldin subunit beta from Methanococcus maripaludis (strain DSM 14266 / JCM 13030 / NBRC 101832 / S2 / LL).